The sequence spans 520 residues: Actin nucleation-promoting factor WAS (520 aa).

The span at methionine 1–glycine 17 shows a compositional bias: gly residues. Disordered regions lie at residues methionine 1–asparagine 23 and glutamine 148–lysine 247. The WH1 domain maps to leucine 41–arginine 150. A compositionally biased stretch (polar residues) spans aspartate 203 to arginine 213. One can recognise a CRIB domain in the interval isoleucine 240–glycine 253. Tyrosine 293 carries the post-translational modification Phosphotyrosine. A disordered region spans residues glutamine 307–aspartate 520. Residues arginine 323–glutamine 342 show a composition bias toward gly residues. GRSGPLPPXP motif repeat units lie at residues glycine 354–proline 363 and glycine 393–leucine 402. The segment covering proline 358–proline 437 has biased composition (pro residues). In terms of domain architecture, WH2 spans glycine 448–threonine 465. The span at asparagine 471–glutamate 482 shows a compositional bias: polar residues. Phosphoserine is present on residues serine 501 and serine 502. Positions glutamate 504–aspartate 520 are enriched in acidic residues.

Binds the Arp2/3 complex. Interacts with CDC42, RAC, NCK, HCK, FYN, SRC kinase FGR, BTK, ABL1, PSTPIP1, WIP, and to the p85 subunit of PLC-gamma. Interacts (via C-terminus) with ALDOA. Interacts with NCK1 (via SH3 domains). Interacts with FCHSD2. In terms of processing, phosphorylated at Tyr-293 by FYN and HCK, inducing WAS effector activity after TCR engagement. Phosphorylation at Tyr-293 enhances WAS activity in promoting actin polymerization and filopodia formation.

Its subcellular location is the cytoplasm. It localises to the cytoskeleton. The protein localises to the nucleus. In terms of biological role, effector protein for Rho-type GTPases that regulates actin filament reorganization via its interaction with the Arp2/3 complex. Important for efficient actin polymerization. Possible regulator of lymphocyte and platelet function. Mediates actin filament reorganization and the formation of actin pedestals upon infection by pathogenic bacteria. In addition to its role in the cytoplasmic cytoskeleton, also promotes actin polymerization in the nucleus, thereby regulating gene transcription and repair of damaged DNA. Promotes homologous recombination (HR) repair in response to DNA damage by promoting nuclear actin polymerization, leading to drive motility of double-strand breaks (DSBs). This Mus musculus (Mouse) protein is Actin nucleation-promoting factor WAS (Was).